The sequence spans 145 residues: Large ribosomal subunit protein uL13 (145 aa).

Belongs to the universal ribosomal protein uL13 family. Part of the 50S ribosomal subunit.

Its function is as follows. This protein is one of the early assembly proteins of the 50S ribosomal subunit, although it is not seen to bind rRNA by itself. It is important during the early stages of 50S assembly. This is Large ribosomal subunit protein uL13 from Staphylococcus saprophyticus subsp. saprophyticus (strain ATCC 15305 / DSM 20229 / NCIMB 8711 / NCTC 7292 / S-41).